The following is a 394-amino-acid chain: Elongation factor Tu (394 aa).

Positions 10 to 204 (KPHVNVGTIG…YLDSYIPEPE (195 aa)) constitute a tr-type G domain. Positions 19–26 (GHVDHGKT) are G1. GTP is bound at residue 19–26 (GHVDHGKT). Threonine 26 contributes to the Mg(2+) binding site. The G2 stretch occupies residues 60–64 (GITIN). The G3 stretch occupies residues 81 to 84 (DCPG). Residues 81-85 (DCPGH) and 136-139 (NKCD) contribute to the GTP site. The G4 stretch occupies residues 136–139 (NKCD). The tract at residues 174–176 (SAL) is G5.

This sequence belongs to the TRAFAC class translation factor GTPase superfamily. Classic translation factor GTPase family. EF-Tu/EF-1A subfamily. As to quaternary structure, monomer.

It localises to the cytoplasm. The enzyme catalyses GTP + H2O = GDP + phosphate + H(+). Its function is as follows. GTP hydrolase that promotes the GTP-dependent binding of aminoacyl-tRNA to the A-site of ribosomes during protein biosynthesis. This Pectobacterium atrosepticum (strain SCRI 1043 / ATCC BAA-672) (Erwinia carotovora subsp. atroseptica) protein is Elongation factor Tu.